A 362-amino-acid polypeptide reads, in one-letter code: Poly(rC)-binding protein 2 (362 aa).

KH domains follow at residues 13 to 75 (TLTI…FAMI) and 97 to 162 (PVTL…VKQI). Lys-115 is covalently cross-linked (Glycyl lysine isopeptide (Lys-Gly) (interchain with G-Cter in SUMO2)). Ser-169 bears the Phosphoserine mark. Lys-181 is covalently cross-linked (Glycyl lysine isopeptide (Lys-Gly) (interchain with G-Cter in SUMO2)). Ser-185 and Ser-268 each carry phosphoserine. A KH 3 domain is found at 284–348 (TTSHELTIPN…ASISLAQYLI (65 aa)). Lys-319 participates in a covalent cross-link: Glycyl lysine isopeptide (Lys-Gly) (interchain with G-Cter in SUMO2). A phosphoserine mark is found at Ser-361 and Ser-362.

Identified in a mRNP complex, at least composed of DHX9, DDX3X, ELAVL1, HNRNPU, IGF2BP1, ILF3, PABPC1, PCBP2, PTBP2, STAU1, STAU2, SYNCRIP and YBX1. Interacts with IFIH1 and RNF135. Interacts with MAVS (via C-terminus) and ITCH (via WW domains). Interacts with CGAS; preventing the formation of liquid-like droplets in which CGAS is activated. Phosphorylated. The non-phosphorylated form(s) exhibited the strongest poly(rC)-binding activity.

Its subcellular location is the nucleus. It is found in the cytoplasm. In terms of biological role, single-stranded nucleic acid binding protein that binds preferentially to oligo dC. Major cellular poly(rC)-binding protein. Also binds poly(rU). Acts as a negative regulator of antiviral signaling. Negatively regulates cellular antiviral responses mediated by MAVS signaling. It acts as an adapter between MAVS and the E3 ubiquitin ligase ITCH, therefore triggering MAVS ubiquitination and degradation. Negativeley regulates the cGAS-STING pathway via interaction with CGAS, preventing the formation of liquid-like droplets in which CGAS is activated. Together with PCBP1, required for erythropoiesis, possibly by regulating mRNA splicing. In Mus musculus (Mouse), this protein is Poly(rC)-binding protein 2 (Pcbp2).